A 102-amino-acid polypeptide reads, in one-letter code: MTLTLGHFLSLGAMLFALSVIGIFLNRKNLIVLLMAIELMLLAVNMNFVAFSYYLGDMHGQIFVFFILTVAAAESAIGLALLVLLFRNKSNINVDELNSLKG.

3 helical membrane-spanning segments follow: residues 5–25 (LGHF…GIFL), 31–51 (IVLL…FVAF), and 62–82 (IFVF…LALL).

Belongs to the complex I subunit 4L family. In terms of assembly, NDH-1 is composed of 14 different subunits. Subunits NuoA, H, J, K, L, M, N constitute the membrane sector of the complex.

Its subcellular location is the cell inner membrane. It catalyses the reaction a quinone + NADH + 5 H(+)(in) = a quinol + NAD(+) + 4 H(+)(out). Functionally, NDH-1 shuttles electrons from NADH, via FMN and iron-sulfur (Fe-S) centers, to quinones in the respiratory chain. The immediate electron acceptor for the enzyme in this species is believed to be ubiquinone. Couples the redox reaction to proton translocation (for every two electrons transferred, four hydrogen ions are translocated across the cytoplasmic membrane), and thus conserves the redox energy in a proton gradient. This chain is NADH-quinone oxidoreductase subunit K, found in Variovorax paradoxus (strain S110).